We begin with the raw amino-acid sequence, 351 residues long: MTNSIRIGTRKSPLALIHTNLVIQQIKQFFPDINCEIVPIITSGDLIQNKPLYDIGGKALFLKEIEQALLDKKIDLAVHSLKDVPGRMPEPLVIAAVLEREDPRDVFVCLKYKSIEELPQNAVIGSSAVRRKAFIQKIRPDLKVTVFRGNVDSRIKKLMTGEVDATILAYTGLKRLEVFNPEYCHLIEYSQMLPCIGQGVIAVEIRKDDNAMLEICNQINHLPTFELIKPERAFLEYLDANCRTPIAAYSQYLDANPRHLSKLAYREVLEGNTEALATAAYKSNRTDASTGLTYKLPLEVEFGKVSNIQTNFMLGNLDGSKITFHTETTNIKTSTEAGIKAAKMMLEAICK.

Position 242 is an S-(dipyrrolylmethanemethyl)cysteine (cysteine 242). An RPE1 insert domain is found at 257 to 306 (PRHLSKLAYREVLEGNTEALATAAYKSNRTDASTGLTYKLPLEVEFGKVS).

This sequence belongs to the HMBS family. In terms of assembly, monomer. The cofactor is dipyrromethane.

It carries out the reaction 4 porphobilinogen + H2O = hydroxymethylbilane + 4 NH4(+). It participates in porphyrin-containing compound metabolism; protoporphyrin-IX biosynthesis; coproporphyrinogen-III from 5-aminolevulinate: step 2/4. Tetrapolymerization of the monopyrrole PBG into the hydroxymethylbilane pre-uroporphyrinogen in several discrete steps. The sequence is that of Porphobilinogen deaminase from Rickettsia conorii (strain ATCC VR-613 / Malish 7).